Reading from the N-terminus, the 970-residue chain is Protein translocase subunit SecA (970 aa).

ATP is bound by residues Q99, 117–121 (GEGKT), and D631.

It belongs to the SecA family. In terms of assembly, monomer and homodimer. Part of the essential Sec protein translocation apparatus which comprises SecA, SecYEG and auxiliary proteins SecDF. Other proteins may also be involved.

It localises to the cell inner membrane. The protein resides in the cytoplasm. It catalyses the reaction ATP + H2O + cellular proteinSide 1 = ADP + phosphate + cellular proteinSide 2.. In terms of biological role, part of the Sec protein translocase complex. Interacts with the SecYEG preprotein conducting channel. Has a central role in coupling the hydrolysis of ATP to the transfer of proteins into and across the cell membrane, serving as an ATP-driven molecular motor driving the stepwise translocation of polypeptide chains across the membrane. The chain is Protein translocase subunit SecA from Chlamydia caviae (strain ATCC VR-813 / DSM 19441 / 03DC25 / GPIC) (Chlamydophila caviae).